A 227-amino-acid polypeptide reads, in one-letter code: ATP phosphoribosyltransferase (227 aa).

It belongs to the ATP phosphoribosyltransferase family. Short subfamily. Heteromultimer composed of HisG and HisZ subunits.

Its subcellular location is the cytoplasm. It carries out the reaction 1-(5-phospho-beta-D-ribosyl)-ATP + diphosphate = 5-phospho-alpha-D-ribose 1-diphosphate + ATP. It participates in amino-acid biosynthesis; L-histidine biosynthesis; L-histidine from 5-phospho-alpha-D-ribose 1-diphosphate: step 1/9. Its function is as follows. Catalyzes the condensation of ATP and 5-phosphoribose 1-diphosphate to form N'-(5'-phosphoribosyl)-ATP (PR-ATP). Has a crucial role in the pathway because the rate of histidine biosynthesis seems to be controlled primarily by regulation of HisG enzymatic activity. The chain is ATP phosphoribosyltransferase from Rhodospirillum rubrum (strain ATCC 11170 / ATH 1.1.1 / DSM 467 / LMG 4362 / NCIMB 8255 / S1).